The primary structure comprises 403 residues: tRNA pseudouridine synthase 4 (403 aa).

Asp-75 functions as the Nucleophile in the catalytic mechanism.

Belongs to the pseudouridine synthase TruB family.

It is found in the nucleus. The protein localises to the mitochondrion. It catalyses the reaction uridine(55) in tRNA = pseudouridine(55) in tRNA. The catalysed reaction is a uridine in mRNA = a pseudouridine in mRNA. Its function is as follows. Responsible for synthesis of pseudouridine from uracil-55 in the psi GC loop of transfer RNAs. Also catalyzes pseudouridylation of mRNAs with the consensus sequence 5'-GGUUCRA-3'. The polypeptide is tRNA pseudouridine synthase 4 (PUS4) (Saccharomyces cerevisiae (strain ATCC 204508 / S288c) (Baker's yeast)).